Reading from the N-terminus, the 96-residue chain is Cysteine proteinase (96 aa).

The cysteines at positions 25 and 79 are disulfide-linked. Catalysis depends on residues histidine 31 and asparagine 58.

It belongs to the peptidase C1 family.

This Carica papaya (Papaya) protein is Cysteine proteinase.